The primary structure comprises 136 residues: Large ribosomal subunit protein uL16 (136 aa).

This sequence belongs to the universal ribosomal protein uL16 family. In terms of assembly, part of the 50S ribosomal subunit.

Functionally, binds 23S rRNA and is also seen to make contacts with the A and possibly P site tRNAs. The protein is Large ribosomal subunit protein uL16 of Ehrlichia ruminantium (strain Gardel).